The primary structure comprises 60 residues: Large ribosomal subunit protein bL32 (60 aa).

Residues 1–23 (MAKHPVPKKKTSKSKRDMRRSHH) are compositionally biased toward basic residues. A disordered region spans residues 1-26 (MAKHPVPKKKTSKSKRDMRRSHHALV).

The protein belongs to the bacterial ribosomal protein bL32 family.

This Deinococcus geothermalis (strain DSM 11300 / CIP 105573 / AG-3a) protein is Large ribosomal subunit protein bL32.